The chain runs to 209 residues: Protease (209 aa).

Catalysis depends on residues H60, D77, and C127.

Belongs to the peptidase C5 family. Interacts with protease cofactor pVI-C; this interaction is necessary for protease activation.

It localises to the virion. Its subcellular location is the host nucleus. It carries out the reaction Cleaves proteins of the adenovirus and its host cell at two consensus sites: -Yaa-Xaa-Gly-Gly-|-Xaa- and -Yaa-Xaa-Gly-Xaa-|-Gly- (in which Yaa is Met, Ile or Leu, and Xaa is any amino acid).. Its activity is regulated as follows. Requires DNA and protease cofactor for maximal activation. Inside nascent virions, becomes partially activated by binding to the viral DNA, allowing it to cleave the cofactor that binds to the protease and fully activates it. Actin, like the viral protease cofactor, seems to act as a cofactor in the cleavage of cytokeratin 18 and of actin itself. Its function is as follows. Cleaves viral precursor proteins (pTP, pIIIa, pVI, pVII, pVIII, and pX) inside newly assembled particles giving rise to mature virions. Protease complexed to its cofactor slides along the viral DNA to specifically locate and cleave the viral precursors. Mature virions have a weakened organization compared to the unmature virions, thereby facilitating subsequent uncoating. Without maturation, the particle lacks infectivity and is unable to uncoat. Late in adenovirus infection, in the cytoplasm, may participate in the cytoskeleton destruction. Cleaves host cell cytoskeletal keratins K7 and K18. This chain is Protease, found in Homo sapiens (Human).